Consider the following 491-residue polypeptide: Cytosol aminopeptidase (491 aa).

K263 and D268 together coordinate Mn(2+). Residue K275 is part of the active site. Residues D286, D345, and E347 each coordinate Mn(2+). R349 is an active-site residue.

The protein belongs to the peptidase M17 family. It depends on Mn(2+) as a cofactor.

It is found in the cytoplasm. It carries out the reaction Release of an N-terminal amino acid, Xaa-|-Yaa-, in which Xaa is preferably Leu, but may be other amino acids including Pro although not Arg or Lys, and Yaa may be Pro. Amino acid amides and methyl esters are also readily hydrolyzed, but rates on arylamides are exceedingly low.. The catalysed reaction is Release of an N-terminal amino acid, preferentially leucine, but not glutamic or aspartic acids.. Presumably involved in the processing and regular turnover of intracellular proteins. Catalyzes the removal of unsubstituted N-terminal amino acids from various peptides. This Haemophilus influenzae (strain ATCC 51907 / DSM 11121 / KW20 / Rd) protein is Cytosol aminopeptidase (pepA).